A 99-amino-acid chain; its full sequence is UPF0213 protein YazA (99 aa).

The GIY-YIG domain maps to 4–79 (NNHFFYVVKC…KKLTRKKKEL (76 aa)).

Belongs to the UPF0213 family.

This chain is UPF0213 protein YazA (yazA), found in Bacillus subtilis (strain 168).